The primary structure comprises 420 residues: Subtilisin (420 aa).

Positions 1-31 (MKRSGKIFTTAMLAVTLMMPAMGVSANEGNA) are cleaved as a signal peptide. Residues 32–111 (AAEGNEKFRV…DKPEALYNAM (80 aa)) constitute a propeptide that is removed on maturation. Glutamine 115 serves as a coordination point for Ca(2+). In terms of domain architecture, Peptidase S8 spans 118-420 (PWGIKAIYNN…ASGFGFATVQ (303 aa)). The active-site Charge relay system is aspartate 145. Residue aspartate 154 participates in Ca(2+) binding. Catalysis depends on charge relay system residues histidine 182 and serine 360.

This sequence belongs to the peptidase S8 family. The cofactor is Ca(2+).

The protein localises to the secreted. It catalyses the reaction Hydrolysis of proteins with broad specificity for peptide bonds, and a preference for a large uncharged residue in P1. Hydrolyzes peptide amides.. Functionally, subtilisin is an extracellular alkaline serine protease, it catalyzes the hydrolysis of proteins and peptide amides. The chain is Subtilisin (sub1) from Bacillus sp. (strain TA39).